Reading from the N-terminus, the 517-residue chain is Ribonuclease Y (517 aa).

A helical transmembrane segment spans residues 3–23 (AILYVIVAVIALILGGAAGVA). The KH domain maps to 207–292 (TVTVVSLPND…EMVEKAQKEV (86 aa)). Residues 333–426 (VLKHSIEVAH…VAAADAISAA (94 aa)) form the HD domain.

It belongs to the RNase Y family.

It localises to the cell membrane. In terms of biological role, endoribonuclease that initiates mRNA decay. This is Ribonuclease Y from Symbiobacterium thermophilum (strain DSM 24528 / JCM 14929 / IAM 14863 / T).